Here is a 582-residue protein sequence, read N- to C-terminus: Proline--tRNA ligase (582 aa).

Belongs to the class-II aminoacyl-tRNA synthetase family. ProS type 1 subfamily. As to quaternary structure, homodimer.

Its subcellular location is the cytoplasm. It carries out the reaction tRNA(Pro) + L-proline + ATP = L-prolyl-tRNA(Pro) + AMP + diphosphate. Its function is as follows. Catalyzes the attachment of proline to tRNA(Pro) in a two-step reaction: proline is first activated by ATP to form Pro-AMP and then transferred to the acceptor end of tRNA(Pro). As ProRS can inadvertently accommodate and process non-cognate amino acids such as alanine and cysteine, to avoid such errors it has two additional distinct editing activities against alanine. One activity is designated as 'pretransfer' editing and involves the tRNA(Pro)-independent hydrolysis of activated Ala-AMP. The other activity is designated 'posttransfer' editing and involves deacylation of mischarged Ala-tRNA(Pro). The misacylated Cys-tRNA(Pro) is not edited by ProRS. The protein is Proline--tRNA ligase of Mycobacterium tuberculosis (strain CDC 1551 / Oshkosh).